Consider the following 611-residue polypeptide: Probable cysteine desulfurase 1 (611 aa).

A cargo-loading domain region spans residues 1–208 (MRATQLYAAS…HEMVDVFDIQ (208 aa)). Lysine 428 bears the N6-(pyridoxal phosphate)lysine mark. Residue cysteine 566 is the Cysteine persulfide intermediate of the active site.

This sequence belongs to the class-V pyridoxal-phosphate-dependent aminotransferase family. Csd subfamily. There are 1-2 copies of this protein in each type 2A encapsulin shell. Pyridoxal 5'-phosphate serves as cofactor.

It is found in the encapsulin nanocompartment. The enzyme catalyses (sulfur carrier)-H + L-cysteine = (sulfur carrier)-SH + L-alanine. In terms of biological role, cargo protein of a type 2A encapsulin nanocompartment involved in sulfur metabolism. Cysteine desulfurases mobilize the sulfur from L-cysteine to yield L-alanine, an essential step in sulfur metabolism for biosynthesis of a variety of sulfur-containing biomolecules. This chain is Probable cysteine desulfurase 1, found in Mycobacterium leprae (strain TN).